Consider the following 624-residue polypeptide: DNA mismatch repair protein MutL (624 aa).

The interval leucine 416–lysine 436 is disordered.

The protein belongs to the DNA mismatch repair MutL/HexB family.

This protein is involved in the repair of mismatches in DNA. It is required for dam-dependent methyl-directed DNA mismatch repair. May act as a 'molecular matchmaker', a protein that promotes the formation of a stable complex between two or more DNA-binding proteins in an ATP-dependent manner without itself being part of a final effector complex. The polypeptide is DNA mismatch repair protein MutL (Chlorobaculum tepidum (strain ATCC 49652 / DSM 12025 / NBRC 103806 / TLS) (Chlorobium tepidum)).